We begin with the raw amino-acid sequence, 617 residues long: Chaperone protein HscA homolog (617 aa).

The protein belongs to the heat shock protein 70 family.

Its function is as follows. Probable chaperone. Has a low intrinsic ATPase activity which is markedly stimulated by HscB. The polypeptide is Chaperone protein HscA homolog (Vibrio parahaemolyticus serotype O3:K6 (strain RIMD 2210633)).